The sequence spans 447 residues: GTPase Der (447 aa).

EngA-type G domains are found at residues 3–167 and 181–354; these read PVIA…FAQR and IRLA…AAAM. GTP contacts are provided by residues 9–16, 56–60, 119–122, 187–194, 234–238, and 299–302; these read GRPNVGKS, DTGGF, NKAE, DTAGI, and NKWD. The KH-like domain maps to 355–439; that stretch reads SNLSTPKLTR…PLRIELRSGK (85 aa).

Belongs to the TRAFAC class TrmE-Era-EngA-EngB-Septin-like GTPase superfamily. EngA (Der) GTPase family. As to quaternary structure, associates with the 50S ribosomal subunit.

In terms of biological role, GTPase that plays an essential role in the late steps of ribosome biogenesis. The sequence is that of GTPase Der from Herminiimonas arsenicoxydans.